We begin with the raw amino-acid sequence, 122 residues long: Large ribosomal subunit protein uL18 (122 aa).

This sequence belongs to the universal ribosomal protein uL18 family. Part of the 50S ribosomal subunit; part of the 5S rRNA/L5/L18/L25 subcomplex. Contacts the 5S and 23S rRNAs.

Functionally, this is one of the proteins that bind and probably mediate the attachment of the 5S RNA into the large ribosomal subunit, where it forms part of the central protuberance. This chain is Large ribosomal subunit protein uL18, found in Desulforamulus reducens (strain ATCC BAA-1160 / DSM 100696 / MI-1) (Desulfotomaculum reducens).